The sequence spans 247 residues: 3-deoxy-manno-octulosonate cytidylyltransferase (247 aa).

Belongs to the KdsB family.

The protein resides in the cytoplasm. The enzyme catalyses 3-deoxy-alpha-D-manno-oct-2-ulosonate + CTP = CMP-3-deoxy-beta-D-manno-octulosonate + diphosphate. Its pathway is nucleotide-sugar biosynthesis; CMP-3-deoxy-D-manno-octulosonate biosynthesis; CMP-3-deoxy-D-manno-octulosonate from 3-deoxy-D-manno-octulosonate and CTP: step 1/1. It functions in the pathway bacterial outer membrane biogenesis; lipopolysaccharide biosynthesis. Activates KDO (a required 8-carbon sugar) for incorporation into bacterial lipopolysaccharide in Gram-negative bacteria. This is 3-deoxy-manno-octulosonate cytidylyltransferase from Bdellovibrio bacteriovorus (strain ATCC 15356 / DSM 50701 / NCIMB 9529 / HD100).